A 412-amino-acid chain; its full sequence is uncharacterized protein (412 aa).

7 tandem repeats follow at residues Gly112–Ser116, Gly117–Ser121, Gly122–Asp126, Gly127–Asp131, Gly132–Ser136, Gly137–Asp141, and Gly142–Ser146. The segment at Gly112–Ser146 is 7 X 5 AA tandem repeats of G-[NS]-[IV]-R-[DNS]. Low complexity predominate over residues Ser116–Asp126. Residues Ser116 to Thr208 are disordered. Residues Asn192–Thr208 are compositionally biased toward basic and acidic residues.

This sequence belongs to the asfivirus B407L family.

This is an uncharacterized protein from Ornithodoros (relapsing fever ticks).